A 197-amino-acid chain; its full sequence is Imidazoleglycerol-phosphate dehydratase (197 aa).

It belongs to the imidazoleglycerol-phosphate dehydratase family.

Its subcellular location is the cytoplasm. The catalysed reaction is D-erythro-1-(imidazol-4-yl)glycerol 3-phosphate = 3-(imidazol-4-yl)-2-oxopropyl phosphate + H2O. It functions in the pathway amino-acid biosynthesis; L-histidine biosynthesis; L-histidine from 5-phospho-alpha-D-ribose 1-diphosphate: step 6/9. This Cellvibrio japonicus (strain Ueda107) (Pseudomonas fluorescens subsp. cellulosa) protein is Imidazoleglycerol-phosphate dehydratase.